We begin with the raw amino-acid sequence, 295 residues long: Origin of replication complex subunit 6 (295 aa).

The tract at residues 212–295 (PSKRKHDDDS…MALEVSSAAN (84 aa)) is disordered. Over residues 220 to 236 (DSDSSGESSGDDQDELD) the composition is skewed to acidic residues. The segment covering 254–263 (WKSSVLSNKQ) has biased composition (polar residues).

Belongs to the ORC6 family. As to quaternary structure, component of the origin recognition complex (ORC) composed of at least ORC1, ORC2, ORC3, ORC4, ORC5 and ORC6. ORC is regulated in a cell-cycle and development dependent manner. It is sequentially assembled at the exit from anaphase of mitosis and disassembled as cells enter S phase.

It localises to the nucleus. Its function is as follows. Component of the origin recognition complex (ORC) that binds origins of replication. DNA-binding is ATP-dependent. The specific DNA sequences that define origins of replication have not been identified yet. ORC is required to assemble the pre-replication complex necessary to initiate DNA replication. The polypeptide is Origin of replication complex subunit 6 (Oryza sativa subsp. japonica (Rice)).